The primary structure comprises 553 residues: Undecaprenyl phosphate-alpha-4-amino-4-deoxy-L-arabinose arabinosyl transferase (553 aa).

12 helical membrane passes run 8–28 (LVLL…RALW), 83–103 (VRFG…WLAF), 111–131 (VAVL…VGTY), 132–152 (AVLD…FWLG), 176–196 (VMTK…PWVI), 204–224 (VLLF…PWAL), 255–275 (APFW…VALL), 288–308 (IESG…FFSI), 317–337 (ILPC…QLVA), 350–370 (TVFG…WGIA), 380–400 (VLKV…GYLT), and 407–427 (LWQW…GMIP).

This sequence belongs to the glycosyltransferase 83 family.

It is found in the cell inner membrane. It carries out the reaction 4-amino-4-deoxy-alpha-L-arabinopyranosyl di-trans,octa-cis-undecaprenyl phosphate + lipid IVA = lipid IIA + di-trans,octa-cis-undecaprenyl phosphate.. Its pathway is lipopolysaccharide metabolism; 4-amino-4-deoxy-beta-L-arabinose-lipid A biosynthesis. In terms of biological role, catalyzes the transfer of the L-Ara4N moiety of the glycolipid undecaprenyl phosphate-alpha-L-Ara4N to lipid A. The modified arabinose is attached to lipid A and is required for resistance to polymyxin and cationic antimicrobial peptides. This Enterobacter sp. (strain 638) protein is Undecaprenyl phosphate-alpha-4-amino-4-deoxy-L-arabinose arabinosyl transferase.